Here is a 393-residue protein sequence, read N- to C-terminus: Cytotoxic and regulatory T-cell molecule (393 aa).

An N-terminal signal peptide occupies residues 1–17 (MWWRVLSLLAWFPLQEA). Positions 18–114 (SLTNHTETIT…VSTKEVKVIV (97 aa)) constitute an Ig-like V-type domain. At 18–287 (SLTNHTETIT…YLGLARKKSG (270 aa)) the chain is on the extracellular side. Asn-21, Asn-87, and Asn-178 each carry an N-linked (GlcNAc...) asparagine glycan. 2 disulfide bridges follow: Cys-38-Cys-98 and Cys-141-Cys-196. The 93-residue stretch at 118 to 210 (PFKPILEASV…RGLQGRKLVA (93 aa)) folds into the Ig-like C2-type domain. The interval 225–273 (SDALERNSLSSQDPQQPTSTVSVTEDSSTSEIDKEEKEQTTQDPDLTTE) is disordered. Residues 231–241 (NSLSSQDPQQP) show a composition bias toward polar residues. Low complexity predominate over residues 242–254 (TSTVSVTEDSSTS). Basic and acidic residues predominate over residues 255–264 (EIDKEEKEQT). Residues 288-308 (ILLLTLVSFLIFILFIIVQLF) traverse the membrane as a helical segment. Residues 309-393 (IMKLRKAHVI…KHIQVPESIV (85 aa)) are Cytoplasmic-facing. 2 stretches are compositionally biased toward basic and acidic residues: residues 328–348 (HTLE…EEKN) and 374–387 (ENVQ…KHIQ). 2 disordered regions span residues 328–354 (HTLE…SSHP) and 374–393 (ENVQ…ESIV). The short motif at 390 to 393 (ESIV) is the PDZ-binding element.

Belongs to the nectin family. As to quaternary structure, monomer. May form homodimer (via Ig-like V-type domain). Interacts (via Ig-like V-type domain) with CADM1 (via Ig-like V-type domain); the interaction competes with CRTAM homodimerization and CADM1 homodimerization. Interacts (via PDZ-binding motif) with SCRIB (via PDZ domain 3); the interaction promotes CRTAM and SCRIB polarization in a subset of CD4+ T-cells. In terms of tissue distribution, in the immune system, expression is restricted to activated class-I MHC-restricted cells, including NKT and CD8 T-cells. Strongly expressed in spleen, thymus, small intestine, peripheral blood leukocyte, and in Purkinje neurons in cerebellum. Expressed at much lower levels in testis, ovary, colon, lung and lymphoid tissues.

The protein localises to the cell membrane. Mediates heterophilic cell-cell adhesion which regulates the activation, differentiation and tissue retention of various T-cell subsets. Interaction with CADM1 promotes natural killer (NK) cell cytotoxicity and IFNG/interferon-gamma secretion by CD8+ T-cells in vitro as well as NK cell-mediated rejection of tumors expressing CADM1 in vivo. Regulates CD8+ T-cell proliferation in response to T-cell receptor (TCR) activation. Appears to be dispensable for CD8+ T-cell-mediated cytotoxicity. Interaction with SCRIB promotes the late phase of cellular polarization of a subset of CD4+ T-cells, which in turn regulates TCR-mediated proliferation and IFNG, IL17 and IL22 production. By interacting with CADM1 on CD8+ dendritic cells, regulates the retention of activated CD8+ T-cells within the draining lymph node. Required for the intestinal retention of intraepithelial CD4+ CD8+ T-cells and, to a lesser extent, intraepithelial and lamina propria CD8+ T-cells and CD4+ T-cells. Interaction with CADM1 promotes the adhesion to gut-associated CD103+ dendritic cells, which may facilitate the expression of gut-homing and adhesion molecules on T-cells and the conversion of CD4+ T-cells into CD4+ CD8+ T-cells. This chain is Cytotoxic and regulatory T-cell molecule, found in Homo sapiens (Human).